The primary structure comprises 415 residues: Probable glucan 1,3-beta-glucosidase A (415 aa).

The first 22 residues, 1–22 (MLSRLSQTALVALSLMTVLTEA), serve as a signal peptide directing secretion. Glu-210 acts as the Proton donor in catalysis. Disulfide bonds link Cys-290/Cys-414 and Cys-315/Cys-341. The Nucleophile role is filled by Glu-307. The interval 335–359 (SPRYGDCGNKRQGSSSGLSEQERSD) is disordered.

The protein belongs to the glycosyl hydrolase 5 (cellulase A) family. As to quaternary structure, monomer. Mn(2+) is required as a cofactor.

It localises to the secreted. It carries out the reaction Successive hydrolysis of beta-D-glucose units from the non-reducing ends of (1-&gt;3)-beta-D-glucans, releasing alpha-glucose.. Beta-glucanases participate in the metabolism of beta-glucan, the main structural component of the cell wall. It could also function biosynthetically as a transglycosylase. This Aspergillus clavatus (strain ATCC 1007 / CBS 513.65 / DSM 816 / NCTC 3887 / NRRL 1 / QM 1276 / 107) protein is Probable glucan 1,3-beta-glucosidase A (exgA).